The chain runs to 248 residues: Type III pantothenate kinase (248 aa).

Residue 6–13 (ELGNSQLK) coordinates ATP. Residues tyrosine 94 and 101-104 (GVDR) each bind substrate. The active-site Proton acceptor is aspartate 103. Residue aspartate 123 participates in K(+) binding. ATP is bound at residue threonine 126. Threonine 179 contacts substrate.

The protein belongs to the type III pantothenate kinase family. As to quaternary structure, homodimer. NH4(+) serves as cofactor. Requires K(+) as cofactor.

It is found in the cytoplasm. The enzyme catalyses (R)-pantothenate + ATP = (R)-4'-phosphopantothenate + ADP + H(+). Its pathway is cofactor biosynthesis; coenzyme A biosynthesis; CoA from (R)-pantothenate: step 1/5. Its function is as follows. Catalyzes the phosphorylation of pantothenate (Pan), the first step in CoA biosynthesis. In Hydrogenovibrio crunogenus (strain DSM 25203 / XCL-2) (Thiomicrospira crunogena), this protein is Type III pantothenate kinase.